Consider the following 387-residue polypeptide: Gamma-butyrobetaine dioxygenase (387 aa).

Zn(2+) contacts are provided by Cys38, Cys40, Cys43, and His82. 3 residues coordinate Fe cation: His202, Asp204, and His347. Ser351 is modified (phosphoserine).

This sequence belongs to the gamma-BBH/TMLD family. It depends on Fe(2+) as a cofactor. Requires L-ascorbate as cofactor.

Its subcellular location is the cytoplasm. It carries out the reaction 4-(trimethylamino)butanoate + 2-oxoglutarate + O2 = carnitine + succinate + CO2. The protein operates within amine and polyamine biosynthesis; carnitine biosynthesis. Catalyzes the formation of L-carnitine from gamma-butyrobetaine. This chain is Gamma-butyrobetaine dioxygenase (Bbox1), found in Mus musculus (Mouse).